The primary structure comprises 185 residues: Ribosome-recycling factor (185 aa).

Belongs to the RRF family.

Its subcellular location is the cytoplasm. In terms of biological role, responsible for the release of ribosomes from messenger RNA at the termination of protein biosynthesis. May increase the efficiency of translation by recycling ribosomes from one round of translation to another. The polypeptide is Ribosome-recycling factor (Corynebacterium urealyticum (strain ATCC 43042 / DSM 7109)).